The sequence spans 120 residues: NAD(P)H-quinone oxidoreductase subunit 3, chloroplastic (120 aa).

A run of 3 helical transmembrane segments spans residues 9-29 (FFWA…LISG), 64-84 (MFAL…PWAM), and 88-108 (VLGV…IIGL).

Belongs to the complex I subunit 3 family. NDH is composed of at least 16 different subunits, 5 of which are encoded in the nucleus.

Its subcellular location is the plastid. The protein resides in the chloroplast thylakoid membrane. It carries out the reaction a plastoquinone + NADH + (n+1) H(+)(in) = a plastoquinol + NAD(+) + n H(+)(out). The enzyme catalyses a plastoquinone + NADPH + (n+1) H(+)(in) = a plastoquinol + NADP(+) + n H(+)(out). Its function is as follows. NDH shuttles electrons from NAD(P)H:plastoquinone, via FMN and iron-sulfur (Fe-S) centers, to quinones in the photosynthetic chain and possibly in a chloroplast respiratory chain. The immediate electron acceptor for the enzyme in this species is believed to be plastoquinone. Couples the redox reaction to proton translocation, and thus conserves the redox energy in a proton gradient. In Nicotiana tabacum (Common tobacco), this protein is NAD(P)H-quinone oxidoreductase subunit 3, chloroplastic.